The sequence spans 498 residues: 3-octaprenyl-4-hydroxybenzoate carboxy-lyase (498 aa).

Asn-176 is a Mn(2+) binding site. Prenylated FMN is bound by residues 179–181 (IYR), 193–195 (RWL), and 198–199 (RG). Glu-242 is a Mn(2+) binding site. The active-site Proton donor is the Asp-291.

It belongs to the UbiD family. As to quaternary structure, homohexamer. It depends on prenylated FMN as a cofactor. Requires Mn(2+) as cofactor.

It localises to the cell membrane. It catalyses the reaction a 4-hydroxy-3-(all-trans-polyprenyl)benzoate + H(+) = a 2-(all-trans-polyprenyl)phenol + CO2. Its pathway is cofactor biosynthesis; ubiquinone biosynthesis. Catalyzes the decarboxylation of 3-octaprenyl-4-hydroxy benzoate to 2-octaprenylphenol, an intermediate step in ubiquinone biosynthesis. In Escherichia coli O6:K15:H31 (strain 536 / UPEC), this protein is 3-octaprenyl-4-hydroxybenzoate carboxy-lyase.